Consider the following 85-residue polypeptide: Antibacterial factor-related peptide 2 (85 aa).

The first 17 residues, 1-17 (MFVRSLFLALLLATIVA), serve as a signal peptide directing secretion. Residues 82-85 (IKRG) constitute a propeptide that is removed on maturation.

In terms of tissue distribution, expressed in the pharynx (at protein level). Detected in pharyngeal neurons and secretory cells.

It is found in the secreted. Its function is as follows. Exhibits antimicrobial activity against the Gram-positive bacteria B.subtilis IFO 3134, K.varians MAFF 118076 and S.aureus ATCC 6538P, the Gram-negative bacteria A.tumefaciens MAFF 1001, B.bacteriovorus MAFF 106101 and K.pneumoniae MAFF 519002, and the yeasts C.krusei MAFF 114085, K.thermotolerans MAFF 113848 and T.delbrueckii MAFF 113811. In Caenorhabditis elegans, this protein is Antibacterial factor-related peptide 2.